The chain runs to 400 residues: CinA-like protein (400 aa).

This sequence belongs to the CinA family.

This is CinA-like protein from Escherichia coli (strain SMS-3-5 / SECEC).